The sequence spans 441 residues: Ribulose bisphosphate carboxylase large chain (441 aa).

Residues Asn-89 and Thr-139 each contribute to the substrate site. Residue Lys-141 is the Proton acceptor of the active site. Lys-143 serves as a coordination point for substrate. Residues Lys-167, Asp-169, and Glu-170 each contribute to the Mg(2+) site. N6-carboxylysine is present on Lys-167. The Proton acceptor role is filled by His-260. Positions 261, 293, and 345 each coordinate substrate.

The protein belongs to the RuBisCO large chain family. Type I subfamily. In terms of assembly, heterohexadecamer of 8 large chains and 8 small chains; disulfide-linked. The disulfide link is formed within the large subunit homodimers. Mg(2+) serves as cofactor. Post-translationally, the disulfide bond which can form in the large chain dimeric partners within the hexadecamer appears to be associated with oxidative stress and protein turnover.

It localises to the plastid. The protein localises to the chloroplast. The enzyme catalyses 2 (2R)-3-phosphoglycerate + 2 H(+) = D-ribulose 1,5-bisphosphate + CO2 + H2O. It catalyses the reaction D-ribulose 1,5-bisphosphate + O2 = 2-phosphoglycolate + (2R)-3-phosphoglycerate + 2 H(+). Functionally, ruBisCO catalyzes two reactions: the carboxylation of D-ribulose 1,5-bisphosphate, the primary event in carbon dioxide fixation, as well as the oxidative fragmentation of the pentose substrate in the photorespiration process. Both reactions occur simultaneously and in competition at the same active site. In Viola sororia (Woolly blue violet), this protein is Ribulose bisphosphate carboxylase large chain.